The following is a 223-amino-acid chain: Adenine phosphoribosyltransferase (223 aa).

This sequence belongs to the purine/pyrimidine phosphoribosyltransferase family. Homodimer.

The protein resides in the cytoplasm. The catalysed reaction is AMP + diphosphate = 5-phospho-alpha-D-ribose 1-diphosphate + adenine. It functions in the pathway purine metabolism; AMP biosynthesis via salvage pathway; AMP from adenine: step 1/1. Functionally, catalyzes a salvage reaction resulting in the formation of AMP, that is energically less costly than de novo synthesis. The sequence is that of Adenine phosphoribosyltransferase from Mycobacterium bovis (strain ATCC BAA-935 / AF2122/97).